The primary structure comprises 385 residues: Muconate cycloisomerase 1-2 (385 aa).

Residue Lys-171 is part of the active site. Residues Glu-226 and Asp-251 each coordinate Mn(2+).

This sequence belongs to the mandelate racemase/muconate lactonizing enzyme family. In terms of assembly, homooctamer. Mn(2+) serves as cofactor.

The enzyme catalyses (S)-muconolactone = cis,cis-muconate + H(+). Its pathway is aromatic compound metabolism; beta-ketoadipate pathway; 5-oxo-4,5-dihydro-2-furylacetate from catechol: step 2/3. In terms of biological role, catalyzes a syn cycloisomerization. This chain is Muconate cycloisomerase 1-2 (catB2), found in Acinetobacter lwoffii.